The primary structure comprises 370 residues: DNA replication and repair protein RecF (370 aa).

An ATP-binding site is contributed by 30–37; that stretch reads GENAQGKT.

This sequence belongs to the RecF family.

The protein localises to the cytoplasm. The RecF protein is involved in DNA metabolism; it is required for DNA replication and normal SOS inducibility. RecF binds preferentially to single-stranded, linear DNA. It also seems to bind ATP. The protein is DNA replication and repair protein RecF of Listeria monocytogenes serotype 4b (strain CLIP80459).